The primary structure comprises 427 residues: Lipophilic envelope-spanning tunnel protein A (427 aa).

Residues 1–75 (MALNTPQITP…LTRLAAMAFT (75 aa)) lie on the Cytoplasmic side of the membrane. A helical transmembrane segment spans residues 76–96 (MLLLMPFAWGEPLLHIWLLGI). Over 97 to 120 (RIDANVMQGIWQMTKQGDAITGSM) the chain is Periplasmic. Residues 121 to 141 (VFFCVIGAPLILVTSIAYLWF) traverse the membrane as a helical segment. The Cytoplasmic segment spans residues 142–269 (GNRLGMNLRP…RHSLQKCWAA (128 aa)). A helical transmembrane segment spans residues 270–290 (LLASIVLLLPANLLPISIIYL). The Periplasmic portion of the chain corresponds to 291–310 (NGGRQEDTILSGIMSLASSN). The helical transmembrane segment at 311–331 (IAVAGIVFIASILVPFTKVIV) threads the bilayer. Residues 332–350 (MFTLLLSIHFKCQQGLRTR) are Cytoplasmic-facing. A helical membrane pass occupies residues 351 to 371 (ILLLRMVTWIGRWSMLDLFVI). The Periplasmic portion of the chain corresponds to 372–382 (SLTMSLINRDQ). A helical membrane pass occupies residues 383–403 (ILAFTMGPAAFYFGAAVILTI). Topologically, residues 404-427 (LAVEWLDSRLLWDAHESGNARFDD) are cytoplasmic.

Belongs to the PqiA family. As to quaternary structure, may interact with LetB in the inner membrane.

Its subcellular location is the cell inner membrane. Could be part, together with LetB, of a system that transports lipids between the inner membrane and the outer membrane. Contributes to membrane integrity. The protein is Lipophilic envelope-spanning tunnel protein A of Escherichia coli (strain K12).